Reading from the N-terminus, the 338-residue chain is Transcription factor MYB76 (338 aa).

HTH myb-type domains lie at 9–65 (GEGL…KPDI) and 66–116 (KRGE…KKRL). DNA-binding regions (H-T-H motif) lie at residues 37–61 (WRDI…TNYL) and 89–112 (WSVI…NTHL). Disordered stretches follow at residues 123–171 (PVTH…SSNL) and 176–195 (SKIS…CKKR). Residues 140–154 (MKFDFQKKSNQDEHS) show a composition bias toward basic and acidic residues. A compositionally biased stretch (low complexity) spans 155 to 171 (SQSSSTTPASLPLSSNL).

As to quaternary structure, can form complexes with MYC2, MYC3 or MYC4. As to expression, expressed in both vegetative and generative organs. Mostly present in inflorescences, flowers and seedlings, in the transition zone between roots and the foliar part, and stems, and, to a lower extent, in leaves (in midvein and trichomes).

Its subcellular location is the nucleus. Functionally, plays a role in determining the spatial distribution of aliphatic glucosinolates (AGLSs) within the leaf, mostly short chained. Together with MYB28/HAG1 and MYB29/HAG3, promotes aliphatic glucosinolate biosynthesis and represses indolic glucosinolate biosynthesis, but could not activate AGSL biosynthesis on its own. The chain is Transcription factor MYB76 (MYB76) from Arabidopsis thaliana (Mouse-ear cress).